The primary structure comprises 230 residues: ATP synthase subunit a 1 (230 aa).

A run of 5 helical transmembrane segments spans residues 20-40 (ATIV…WLIT), 78-98 (FLPF…LTIF), 112-132 (AALA…NVGI), 174-194 (LLVA…MTLF), and 195-215 (GLLV…VYIA).

It belongs to the ATPase A chain family. In terms of assembly, F-type ATPases have 2 components, CF(1) - the catalytic core - and CF(0) - the membrane proton channel. CF(1) has five subunits: alpha(3), beta(3), gamma(1), delta(1), epsilon(1). CF(0) has four main subunits: a, b, b' and c.

It is found in the cellular thylakoid membrane. Functionally, key component of the proton channel; it plays a direct role in the translocation of protons across the membrane. In Crocosphaera subtropica (strain ATCC 51142 / BH68) (Cyanothece sp. (strain ATCC 51142)), this protein is ATP synthase subunit a 1.